The following is a 241-amino-acid chain: Lipoprotein MxiJ (241 aa).

The signal sequence occupies residues 1 to 17 (MIRYKGFILFLLLMLIG). C18 carries N-palmitoyl cysteine lipidation. A lipid anchor (S-diacylglycerol cysteine) is attached at C18.

This sequence belongs to the YscJ lipoprotein family.

Its subcellular location is the cell outer membrane. Involved in the secretion of the Ipa antigens. This chain is Lipoprotein MxiJ (mxiJ), found in Shigella sonnei.